Here is a 737-residue protein sequence, read N- to C-terminus: Aryl hydrocarbon receptor nuclear translocator 2 (737 aa).

A disordered region spans residues Met-1–Gly-73. Residues Ser-64 to Gly-73 show a composition bias toward basic and acidic residues. The bHLH domain occupies Tyr-78–Met-131. 2 PAS domains span residues Thr-149–Met-221 and Ser-340–Lys-406. Residues Ser-413–Leu-456 enclose the PAC domain. Disordered regions lie at residues Met-525 to Ser-556 and Gln-588 to Tyr-721. Polar residues-rich tracts occupy residues Pro-528–Pro-543 and Gln-588–Asp-626. The span at Pro-627–Ser-642 shows a compositional bias: low complexity. Positions Gly-643–Phe-656 are enriched in polar residues. Low complexity predominate over residues Ser-659–Gln-688.

In terms of assembly, efficient DNA binding requires dimerization with another bHLH protein. Heterodimer with the aryl hydrocarbon receptor (AHR), SIM1 or HIF2A/EPAS-1. As to expression, isoform 1 and isoform 2 are most highly expressed in the brain, eye and skeletal muscle and to a lower degree in liver, heart, kidney and swim bladder. Isoform 3 is most highly expressed in the eye, forebrain, midbrain, hindbrain, skeletal muscle, gills and brain but is barely detectable in liver, heart, kidney and swim bladder. Before the pharyngula period isoform 3 is expressed throughout the entire embryo and during this period extensively in the brain and eye.

The protein localises to the nucleus. Its function is as follows. Transcription factor that plays a role in the development of the hypothalamo-pituitary axis. Specifically recognizes the xenobiotic response element (XRE). Isoform 1 acts as a transcriptional activator. Isoform 3 acts as a transcriptional repressor. The sequence is that of Aryl hydrocarbon receptor nuclear translocator 2 from Danio rerio (Zebrafish).